A 217-amino-acid chain; its full sequence is uncharacterized protein (217 aa).

Helical transmembrane passes span 9–29 (ISLASSVVATTVLVAPVLSTI), 54–74 (FLSTIIGAGYPIYKTYLLLEL), 103–125 (LMAYWCVYGCVTAAESILGRFLS), and 135–157 (IVFWLWLLNPRTQGAAFIYASYI).

This sequence belongs to the DP1 family.

It localises to the endoplasmic reticulum membrane. This is an uncharacterized protein from Schizosaccharomyces pombe (strain 972 / ATCC 24843) (Fission yeast).